The chain runs to 360 residues: Membrane-bound lytic murein transglycosylase C (360 aa).

The signal sequence occupies residues 1-16 (MKKLLALAVIAPLLIS). Cys17 carries the N-palmitoyl cysteine lipid modification. A lipid anchor (S-diacylglycerol cysteine) is attached at Cys17.

Belongs to the transglycosylase Slt family.

The protein localises to the cell outer membrane. It catalyses the reaction Exolytic cleavage of the (1-&gt;4)-beta-glycosidic linkage between N-acetylmuramic acid (MurNAc) and N-acetylglucosamine (GlcNAc) residues in peptidoglycan, from either the reducing or the non-reducing ends of the peptidoglycan chains, with concomitant formation of a 1,6-anhydrobond in the MurNAc residue.. In terms of biological role, murein-degrading enzyme. May play a role in recycling of muropeptides during cell elongation and/or cell division. The polypeptide is Membrane-bound lytic murein transglycosylase C (Salmonella typhi).